Here is a 95-residue protein sequence, read N- to C-terminus: Small ribosomal subunit protein uS19 (95 aa).

The tract at residues 73–95 (EFSPTRSYRGHGADKNAKGSKKK) is disordered.

The protein belongs to the universal ribosomal protein uS19 family.

Its function is as follows. Protein S19 forms a complex with S13 that binds strongly to the 16S ribosomal RNA. This chain is Small ribosomal subunit protein uS19, found in Deinococcus deserti (strain DSM 17065 / CIP 109153 / LMG 22923 / VCD115).